Consider the following 193-residue polypeptide: NADH-quinone oxidoreductase subunit B (193 aa).

The interval methionine 1–arginine 25 is disordered. 4 residues coordinate [4Fe-4S] cluster: cysteine 72, cysteine 73, cysteine 137, and cysteine 167.

The protein belongs to the complex I 20 kDa subunit family. As to quaternary structure, NDH-1 is composed of 14 different subunits. Subunits NuoB, C, D, E, F, and G constitute the peripheral sector of the complex. It depends on [4Fe-4S] cluster as a cofactor.

The protein localises to the cell inner membrane. The enzyme catalyses a quinone + NADH + 5 H(+)(in) = a quinol + NAD(+) + 4 H(+)(out). Functionally, NDH-1 shuttles electrons from NADH, via FMN and iron-sulfur (Fe-S) centers, to quinones in the respiratory chain. Couples the redox reaction to proton translocation (for every two electrons transferred, four hydrogen ions are translocated across the cytoplasmic membrane), and thus conserves the redox energy in a proton gradient. The sequence is that of NADH-quinone oxidoreductase subunit B from Mesorhizobium japonicum (strain LMG 29417 / CECT 9101 / MAFF 303099) (Mesorhizobium loti (strain MAFF 303099)).